The following is a 918-amino-acid chain: Interleukin-6 receptor subunit beta (918 aa).

A signal peptide spans 1–22 (MLTLQTWLVQALFIFLTTESTG). Residues 23–619 (ELLDPCGYIS…TPKFAQGEIE (597 aa)) lie on the Extracellular side of the membrane. The region spanning 26 to 120 (DPCGYISPES…LEQNVYGITI (95 aa)) is the Ig-like C2-type domain. Cystine bridges form between cysteine 28/cysteine 54 and cysteine 48/cysteine 103. N-linked (GlcNAc...) asparagine glycans are attached at residues asparagine 43, asparagine 83, and asparagine 131. Fibronectin type-III domains lie at 125–216 (PPEK…NFDP), 224–324 (PPHN…TYED), 329–424 (APSF…FQAT), 426–517 (PVMD…LKQA), and 518–613 (PPSK…TPKF). Cysteine 134 and cysteine 144 are oxidised to a cystine. Residue asparagine 157 is glycosylated (N-linked (GlcNAc...) asparagine). The cysteines at positions 172 and 182 are disulfide-linked. N-linked (GlcNAc...) asparagine glycosylation occurs at asparagine 227. The WSXWS motif signature appears at 310–314 (WSDWS). N-linked (GlcNAc...) asparagine glycosylation is found at asparagine 379 and asparagine 383. The N-linked (GlcNAc...) (complex) asparagine glycan is linked to asparagine 390. Cysteine 458 and cysteine 466 are oxidised to a cystine. 2 N-linked (GlcNAc...) asparagine glycosylation sites follow: asparagine 553 and asparagine 564. The helical transmembrane segment at 620-641 (AIVVPVCLAFLLTTLLGVLFCF) threads the bilayer. Topologically, residues 642–918 (NKRDLIKKHI…TVRQGGYMPQ (277 aa)) are cytoplasmic. The short motif at 651-659 (IWPNVPDPS) is the Box 1 motif element. 2 disordered regions span residues 660-681 (KSHI…SKDQ) and 722-758 (EGHS…STVQ). Residues serine 661 and serine 667 each carry the phosphoserine modification. Residues 731–755 (SSCMSSSRPSISSSDENESSQNTSS) are compositionally biased toward low complexity. A phosphoserine mark is found at serine 782, serine 789, serine 829, and serine 839.

The protein belongs to the type I cytokine receptor family. Type 2 subfamily. As to quaternary structure, component of a hexamer of two molecules each of IL6, IL6R and IL6ST; associates with the complex IL6:IL6R but does not interact with IL6. Forms heterodimers composed of LIFR and IL6ST (type I OSM receptor) which are activated by LIF and OSM. Also forms heterodimers composed of OSMR and IL6ST (type II receptor) which are activated by OSM but not by LIF. Component of a receptor complex composed of IL6ST/GP130, IL27RA/WSX1 and CNTFR which interacts with the neuroprotective peptide humanin. Interacts with HCK. Interacts with INPP5D/SHIP1. Interacts with SRC and YES. Interacts with ARMH4; this interaction prevents IL6ST protein homodimerization and bridges ARMH4 with IL6R and STAT3 and therefore inhibits phosphorylation of STAT3 at 'Tyr-705'. (Microbial infection) The homodimer binds two molecules of herpes virus 8/HHV-8 protein vIL-6. Phosphorylation of Ser-782 down-regulates cell surface expression. Post-translationally, heavily N-glycosylated. Glycosylation is required for protein stability and localization in plasma membrane but not for ligand binding. As to expression, found in all the tissues and cell lines examined. Expression not restricted to IL6 responsive cells. In terms of tissue distribution, expressed in blood serum (at protein level).

It localises to the cell membrane. It is found in the secreted. In terms of biological role, signal-transducing molecule. The receptor systems for IL6, LIF, OSM, CNTF, IL11, CTF1 and BSF3 can utilize IL6ST for initiating signal transmission. Binding of IL6 to IL6R induces IL6ST homodimerization and formation of a high-affinity receptor complex, which activates the intracellular JAK-MAPK and JAK-STAT3 signaling pathways. That causes phosphorylation of IL6ST tyrosine residues which in turn activates STAT3. In parallel, the IL6 signaling pathway induces the expression of two cytokine receptor signaling inhibitors, SOCS1 and SOCS3, which inhibit JAK and terminate the activity of the IL6 signaling pathway as a negative feedback loop. Also activates the yes-associated protein 1 (YAP) and NOTCH pathways to control inflammation-induced epithelial regeneration, independently of STAT3. Acts as a receptor for the neuroprotective peptide humanin as part of a complex with IL27RA/WSX1 and CNTFR. Mediates signals which regulate immune response, hematopoiesis, pain control and bone metabolism. Has a role in embryonic development. Essential for survival of motor and sensory neurons and for differentiation of astrocytes. Required for expression of TRPA1 in nociceptive neurons. Required for the maintenance of PTH1R expression in the osteoblast lineage and for the stimulation of PTH-induced osteoblast differentiation. Required for normal trabecular bone mass and cortical bone composition. Binds to the soluble IL6:sIL6R complex (hyper-IL6), thereby blocking IL6 trans-signaling. Inhibits sIL6R-dependent acute phase response. Also blocks IL11 cluster signaling through IL11R. This is Interleukin-6 receptor subunit beta from Homo sapiens (Human).